A 116-amino-acid polypeptide reads, in one-letter code: Large ribosomal subunit protein uL18 (116 aa).

This sequence belongs to the universal ribosomal protein uL18 family. Part of the 50S ribosomal subunit; part of the 5S rRNA/L5/L18/L25 subcomplex. Contacts the 5S and 23S rRNAs.

In terms of biological role, this is one of the proteins that bind and probably mediate the attachment of the 5S RNA into the large ribosomal subunit, where it forms part of the central protuberance. The polypeptide is Large ribosomal subunit protein uL18 (Psychromonas ingrahamii (strain DSM 17664 / CCUG 51855 / 37)).